The primary structure comprises 314 residues: Leucine-rich repeat-containing protein 59 (314 aa).

Over 1-247 the chain is Cytoplasmic; sequence MNKGKIENIK…VPKAKRSICS (247 aa). LRR repeat units follow at residues 14–35, 38–60, 61–82, 84–106, and 107–126; these read DGNELDLSLSNLTEVPVKELAA, KATFLDLSCNNLITLTPEFCSLT, HLIKIDLNKNQLVCLPEEIGQL, NLQHLDLYNNKLKMLPIGFSQLK, and SLKWLDLKDNPLEPTLAKAA. A coiled-coil region spans residues 146–216; it reads MKVLQEEAEK…AVAAQEQQKK (71 aa). Disordered regions lie at residues 165–197 and 212–237; these read REQEKKKEAKQREKEAREKEAQKKKKAEEKERK and EQQKKKKEEKKKKAAQNQGKKAAPES. Residues 215 to 225 are compositionally biased toward basic residues; it reads KKKKEEKKKKA. Residues 248-268 traverse the membrane as a helical segment; the sequence is LFFSLLLKLVLLLVIGVSSVV. Residues 269–314 lie on the Lumenal side of the membrane; the sequence is AVCQLTELRKEAFCIPLNVHFEETVRWAQGLDVVQQVIQKMSDLRT.

Interacts with SGO1.

Its subcellular location is the microsome membrane. The protein resides in the endoplasmic reticulum membrane. It localises to the nucleus envelope. Functionally, required for nuclear import of FGF1. The sequence is that of Leucine-rich repeat-containing protein 59 (lrrc59) from Danio rerio (Zebrafish).